A 686-amino-acid polypeptide reads, in one-letter code: AsmA family protein YhjG (686 aa).

Residues 1–6 (MSKAGK) are Cytoplasmic-facing. A helical transmembrane segment spans residues 7–27 (ITAAISGAFLLLIVVAIILIA). The Periplasmic portion of the chain corresponds to 28 to 686 (TFDWNRLKPT…CRTILSQMKK (659 aa)). The tract at residues 372–396 (VDSGKGAEKSKRSEQKKGEKSVQPA) is disordered. Basic and acidic residues predominate over residues 376–391 (KGAEKSKRSEQKKGEK).

Belongs to the AsmA family.

It localises to the cell inner membrane. The protein is AsmA family protein YhjG (yhjG) of Escherichia coli (strain K12).